We begin with the raw amino-acid sequence, 874 residues long: Valine--tRNA ligase (874 aa).

The 'HIGH' region motif lies at 46–56; sequence PNVTGHLHIGH. Residues 523–527 carry the 'KMSKS' region motif; the sequence is KMSKS. Lysine 526 provides a ligand contact to ATP. The stretch at 805–874 forms a coiled coil; it reads DYVFQMKKAS…TLTDLKQKVK (70 aa).

Belongs to the class-I aminoacyl-tRNA synthetase family. ValS type 1 subfamily. As to quaternary structure, monomer.

The protein resides in the cytoplasm. The enzyme catalyses tRNA(Val) + L-valine + ATP = L-valyl-tRNA(Val) + AMP + diphosphate. Catalyzes the attachment of valine to tRNA(Val). As ValRS can inadvertently accommodate and process structurally similar amino acids such as threonine, to avoid such errors, it has a 'posttransfer' editing activity that hydrolyzes mischarged Thr-tRNA(Val) in a tRNA-dependent manner. The polypeptide is Valine--tRNA ligase (Ureaplasma parvum serovar 3 (strain ATCC 700970)).